Consider the following 37-residue polypeptide: Esculentin-2B (37 aa).

Cys-31 and Cys-37 are disulfide-bonded.

As to expression, expressed by the skin glands.

It localises to the secreted. In terms of biological role, antibacterial activity against Gram-positive bacterium S.aureus and Gram-negative bacterium E.coli. Has activity against C.albicans. This is Esculentin-2B from Lithobates berlandieri (Rio Grande leopard frog).